The chain runs to 41 residues: Histone H2B.3, sperm (41 aa).

A disordered region spans residues 1–41 (MPRSPSKSSPKKGSPRKASPKRGGKGAKRAGKGGRRRTVVK). 4 consecutive short sequence motifs (SPKK motif) follow at residues 4 to 7 (SPSK), 9 to 12 (SPKK), 14 to 17 (SPRK), and 19 to 22 (SPKR). Positions 9–41 (SPKKGSPRKASPKRGGKGAKRAGKGGRRRTVVK) are enriched in basic residues. Phosphoserine is present on residues Ser14 and Ser19.

The protein belongs to the histone H2B family. The nucleosome is a histone octamer containing two molecules each of H2A, H2B, H3 and H4 assembled in one H3-H4 heterotetramer and two H2A-H2B heterodimers. The octamer wraps approximately 147 bp of DNA. In terms of processing, monoubiquitination gives a specific tag for epigenetic transcriptional activation and is also prerequisite for histone H3 'Lys-4' and 'Lys-79' methylation. Phosphorylated on SPKK motifs 3 and 4; which may regulate DNA binding. Dephosphorylated during maturation of spermatids to mature sperm and rephosphorylated at fertilization.

It is found in the nucleus. Its subcellular location is the chromosome. Core component of nucleosome. Nucleosomes wrap and compact DNA into chromatin, limiting DNA accessibility to the cellular machineries which require DNA as a template. Histones thereby play a central role in transcription regulation, DNA repair, DNA replication and chromosomal stability. DNA accessibility is regulated via a complex set of post-translational modifications of histones, also called histone code, and nucleosome remodeling. The protein is Histone H2B.3, sperm of Echinus esculentus (Sea urchin).